Here is an 80-residue protein sequence, read N- to C-terminus: Raniseptin-2 (80 aa).

Residues 1–22 (MAFLKKSLFLVLFLGIVSLSIC) form the signal peptide. Residues 23–49 (EEEKRVGEEEEKQEEENEELSEEELRE) constitute a propeptide that is removed on maturation. Residues 27 to 46 (RVGEEEEKQEEENEELSEEE) are disordered. Acidic residues predominate over residues 30–44 (EEEEKQEEENEELSE).

Belongs to the frog skin active peptide (FSAP) family. Dermaseptin subfamily. As to expression, expressed by the skin glands.

The protein resides in the secreted. Its function is as follows. Has antibacterial activity. In Boana raniceps (Chaco tree frog), this protein is Raniseptin-2.